The primary structure comprises 449 residues: 23S rRNA (uracil(1939)-C(5))-methyltransferase RlmD (449 aa).

Residues 1 to 66 enclose the TRAM domain; it reads MGRSRYHNKL…AKFDEAKVVE (66 aa). Residues cysteine 79, cysteine 85, cysteine 88, and cysteine 169 each coordinate [4Fe-4S] cluster. 6 residues coordinate S-adenosyl-L-methionine: glutamine 280, phenylalanine 309, asparagine 314, glutamate 330, asparagine 357, and aspartate 379. The Nucleophile role is filled by cysteine 405.

This sequence belongs to the class I-like SAM-binding methyltransferase superfamily. RNA M5U methyltransferase family. RlmD subfamily.

The catalysed reaction is uridine(1939) in 23S rRNA + S-adenosyl-L-methionine = 5-methyluridine(1939) in 23S rRNA + S-adenosyl-L-homocysteine + H(+). Its function is as follows. Catalyzes the formation of 5-methyl-uridine at position 1939 (m5U1939) in 23S rRNA. The sequence is that of 23S rRNA (uracil(1939)-C(5))-methyltransferase RlmD from Francisella tularensis subsp. holarctica (strain LVS).